The following is a 317-amino-acid chain: MALAVRFWCLFPVGRSAAWGLRLPAGAAGSRGQRVPWRLGASEAMGNSGTFKRSLLFSALSYLGFETYQVISQAVLVHAAAKVFEIEEVLEQADYLYESGETEKLYQLLTQYKESEDAELLWRLARASRDVAQLSGTSEEEKKFLVYEALEYAKRALEKNESSCAAHKWYAICIGDVGDYEGIKAKIANAYIIKEHFEKAIELNPKDATSIHLMGIWCYTVAEMPWYQRRIAKVLFATPPGSTYEEALGYFHRAEQVDPNFYSKNLLLLGKTYLKLHNKKLAAFWLTKAKDYPAHTEEDKQIQTEAAQLLRGFSDKN.

K168 carries the post-translational modification N6-succinyllysine. TPR repeat units follow at residues 171-207 and 225-261; these read AICI…NPKD and PWYQ…DPNF.

This sequence belongs to the RMDN family. In terms of assembly, interacts with microtubules.

Its subcellular location is the cytoplasm. The protein resides in the cytoskeleton. It localises to the spindle. The protein localises to the spindle pole. This Bos taurus (Bovine) protein is Regulator of microtubule dynamics protein 1 (RMDN1).